Here is a 314-residue protein sequence, read N- to C-terminus: Epithelial cell adhesion molecule (314 aa).

The signal sequence occupies residues 1 to 23 (MAPPQVLAFGLLLAAATAAVAAA). Residues 24-265 (QQGCVCENYK…PPEFSMQGLQ (242 aa)) are Extracellular-facing. Intrachain disulfides connect Cys27-Cys46, Cys29-Cys59, Cys38-Cys48, Cys66-Cys99, Cys110-Cys116, and Cys118-Cys135. An N-linked (GlcNAc...) asparagine glycan is attached at Asn37. Residues 63-135 (ASKCLVMKAE…RTDKDSEISC (73 aa)) form the Thyroglobulin type-1 domain. The N-linked (GlcNAc...) asparagine glycan is linked to Asn111. An N-linked (GlcNAc...) asparagine glycan is attached at Asn198. The chain crosses the membrane as a helical span at residues 266–288 (AGIIAVIAVVAIAIVAGIIVLIV). The Cytoplasmic portion of the chain corresponds to 289–314 (STKKRRAKYEKAEIKEMGEMHRELNA).

It belongs to the EPCAM family. In terms of assembly, monomer. Interacts with phosphorylated CLDN7. In terms of processing, glycosylation at Asn-198 is crucial for protein stability.

It localises to the lateral cell membrane. The protein localises to the cell junction. Its subcellular location is the tight junction. In terms of biological role, may act as a physical homophilic interaction molecule between intestinal epithelial cells (IECs) and intraepithelial lymphocytes (IELs) at the mucosal epithelium for providing immunological barrier as a first line of defense against mucosal infection. Plays a role in embryonic stem cells proliferation and differentiation. Up-regulates the expression of FABP5, MYC and cyclins A and E. The polypeptide is Epithelial cell adhesion molecule (TACSTD1) (Sus scrofa (Pig)).